A 25-amino-acid polypeptide reads, in one-letter code: Chrysophsin-1 (25 aa).

A Histidine amide modification is found at histidine 25.

As to expression, gill. Localized in certain epithelial cells lining the surface of secondary lamellae and eosinophilic granule cell-like cells at the base of secondary lamellae.

The protein localises to the secreted. In terms of biological role, has antibacterial activity against Gram-positive bacteria B.subtilis ATCC 6633, L.garvieae ATCC 49156 and S.iniae F-8502, and Gram-negative bacteria E.coli WT-2, V.anguillarum ATCC 19264, V.penaeicida KHA, V.harveyi ATCC 14126, V.vulnificus ATCC 33148, A.salmonicida NCMB 1102 and P.putida ATCC 12633. Has hemolytic activity against human red blood cells. Seems to disrupt the membranes by adopting an alpha helical conformation. May play a significant role in innate host defense. This chain is Chrysophsin-1, found in Pagrus major (Red sea bream).